The following is a 541-amino-acid chain: Zinc finger protein 329 (541 aa).

The residue at position 50 (serine 50) is a Phosphoserine. 12 consecutive C2H2-type zinc fingers follow at residues 203–225 (YRCT…HRTH), 231–253 (YTCN…QRIH), 259–281 (YECS…QRIH), 287–309 (YECL…QRTH), 315–337 (YRCN…LRIH), 343–365 (YECS…ERTH), 371–393 (FECA…QKIH), 399–421 (YECK…QRIH), 427–449 (YGCN…QRTH), 455–477 (YECN…QRIH), 483–505 (YQCP…QRLH), and 511–533 (SRCP…QRAH).

Belongs to the krueppel C2H2-type zinc-finger protein family.

It localises to the nucleus. Its function is as follows. May be involved in transcriptional regulation. The polypeptide is Zinc finger protein 329 (ZNF329) (Homo sapiens (Human)).